We begin with the raw amino-acid sequence, 31 residues long: Nemertide alpha-5 (31 aa).

Disulfide bonds link C2-C16, C9-C20, and C15-C26. 2 positions are modified to 4-hydroxyproline: P28 and P29.

The protein belongs to the nemertide family. Confined to the epidermis and to the mucus layer.

The protein resides in the secreted. Functionally, highly potent toxin against both insect and some mammalian sodium channels (Nav). It potently inhibits inactivation of insect sodium channels of B.germanica (BgNav1) (EC(50)=7.8 nM) and also delays the inactivation of mammalian Nav with potent activity on Nav1.3/SCN3A and Nav1.4/SCN4A (hNav1.1/SCN1A; EC(50)=102.1 nM, rNav1.2/SCN2A; EC(50)=156.1 nM, rNav1.3/SCN3A; EC(50)=9.4 nM, rNav1.4/SCN4A; EC(50)=15.4 nM, hNav1.5/SCN5A; EC(50)=132.7 nM, mNav1.6/SCN8A; EC(50)=66.9 nM, hNav1.9/SCN9A; EC(50)=73 nM). 1 uM is enough to completely inhibits the inactivation, resulting in sustained non-inactivating currents. In addition, the toxin significantly enhances the recovery from inactivation, and the open state is not required for the toxin to interact with the channel. In vivo, injection into brine shrimp (Artemia salina) stops movement or causes death after 24 hours (EC(50)=0.4 uM). The chain is Nemertide alpha-5 from Ramphogordius pseudolacteus (Ribbon worm).